The chain runs to 1526 residues: DNA topoisomerase 2-alpha (1526 aa).

At M1 the chain carries N-acetylmethionine. At S4 the chain carries Phosphoserine. A Glycyl lysine isopeptide (Lys-Gly) (interchain with G-Cter in SUMO2) cross-link involves residue K17. ATP contacts are provided by residues N90, N118, and 146 to 148 (SSN). Glycyl lysine isopeptide (Lys-Gly) (interchain with G-Cter in SUMO2) cross-links involve residues K154 and K155. 159 to 166 (GRNGYGAK) serves as a coordination point for ATP. A Phosphothreonine modification is found at T280. Residues 340-342 (KKK) are interaction with DNA. Residue K350 forms a Glycyl lysine isopeptide (Lys-Gly) (interchain with G-Cter in SUMO2) linkage. ATP is bound at residue 374-376 (QTK). Glycyl lysine isopeptide (Lys-Gly) (interchain with G-Cter in SUMO2) cross-links involve residues K384, K395, K414, K416, K423, and K438. The Toprim domain maps to 453-570 (CTLILTEGDS…SLLRHRFLEE (118 aa)). E459 contributes to the Mg(2+) binding site. Residues K464, K478, and K527 each participate in a glycyl lysine isopeptide (Lys-Gly) (interchain with G-Cter in SUMO2) cross-link. Mg(2+) contacts are provided by D539 and D541. Residues K582, K597, K612, K620, K623, K630, K637, K653, K660, and K674 each participate in a glycyl lysine isopeptide (Lys-Gly) (interchain with G-Cter in SUMO2) cross-link. Residues 713–1168 (IPSMVDGLKP…TPSDLWKEDL (456 aa)) enclose the Topo IIA-type catalytic domain. Y803 functions as the O-(5'-phospho-DNA)-tyrosine intermediate in the catalytic mechanism. The interval 988–997 (KLQTSLTCNS) is interaction with DNA. A Glycyl lysine isopeptide (Lys-Gly) (interchain with G-Cter in SUMO2) cross-link involves residue K1073. Basic and acidic residues predominate over residues 1087–1096 (AWKEAQQKVP). The interval 1087 to 1120 (AWKEAQQKVPEEEENEENEESESESTSPAAESGP) is disordered. Residues 1097–1109 (EEEENEENEESES) show a composition bias toward acidic residues. Glycyl lysine isopeptide (Lys-Gly) (interchain with G-Cter in SUMO2) cross-links involve residues K1193 and K1201. S1210 bears the Phosphoserine mark. Residues 1229–1526 (EKKIRRKIKS…YLEESDDDLF (298 aa)) form a disordered region. K1237 participates in a covalent cross-link: Glycyl lysine isopeptide (Lys-Gly) (interchain with G-Cter in SUMO1); alternate. A Glycyl lysine isopeptide (Lys-Gly) (interchain with G-Cter in SUMO2); alternate cross-link involves residue K1237. Residue T1244 is modified to Phosphothreonine. Positions 1254 to 1268 (LRQRLEKRQKREPGT) are enriched in basic and acidic residues. Residues K1272, K1279, and K1282 each participate in a glycyl lysine isopeptide (Lys-Gly) (interchain with G-Cter in SUMO2) cross-link. Phosphoserine is present on residues S1291, S1293, S1295, and S1298. At T1323 the chain carries Phosphothreonine. Residues 1326-1346 (LDSDDDFSGLDEKDEDEDFFP) are compositionally biased toward acidic residues. S1328 and S1333 each carry phosphoserine. At T1350 the chain carries Phosphothreonine. Glycyl lysine isopeptide (Lys-Gly) (interchain with G-Cter in SUMO2) cross-links involve residues K1359, K1363, and K1369. S1370 and S1373 each carry phosphoserine. K1381 is covalently cross-linked (Glycyl lysine isopeptide (Lys-Gly) (interchain with G-Cter in SUMO2)). A phosphoserine mark is found at S1383 and S1387. Over residues 1417 to 1427 (TKGQSLTSTAG) the composition is skewed to polar residues. Residue K1418 forms a Glycyl lysine isopeptide (Lys-Gly) (interchain with G-Cter in SUMO2); alternate linkage. K1418 bears the N6-acetyllysine; alternate mark. The interval 1429–1435 (KKRAVPK) is interaction with PLSCR1. K1438 participates in a covalent cross-link: Glycyl lysine isopeptide (Lys-Gly) (interchain with G-Cter in SUMO2); alternate. K1438 carries the post-translational modification N6-acetyllysine; alternate. Glycyl lysine isopeptide (Lys-Gly) (interchain with G-Cter in SUMO2) cross-links involve residues K1450 and K1455. 4 positions are modified to phosphoserine: S1465, S1467, S1470, and S1472. Residues K1480 and K1488 each participate in a glycyl lysine isopeptide (Lys-Gly) (interchain with G-Cter in SUMO2) cross-link. Residues 1487 to 1498 (LKGEERDFHVDL) are compositionally biased toward basic and acidic residues. S1521 carries the phosphoserine modification.

It belongs to the type II topoisomerase family. Homodimer. Interacts with COPS5. Interacts with RECQL5; this stimulates DNA decatenation. Interacts with SETMAR; stimulates the topoisomerase activity. Interacts with DHX9; this interaction occurs in a E2 enzyme UBE2I- and RNA-dependent manner, negatively regulates DHX9-mediated double-stranded DNA and RNA duplex helicase activity and stimulates TOP2A-mediated supercoiled DNA relaxation activity. Interacts with HNRNPU (via C-terminus); this interaction protects the topoisomerase TOP2A from degradation and positively regulates the relaxation of supercoiled DNA in a RNA-dependent manner. Interacts with MCM3AP. Interacts with ERCC6. Interacts with PLSCR1. Interacts with GCNA; this interaction allows the resolution of topoisomerase II (TOP2A) DNA-protein cross-links. Interacts with POL1RA/RPA1 (via dock II) and UBTF in the context of Pol I complex; may assist Pol I transcription initiation by releasing supercoils occurring during DNA unwinding. Interacts with TPRN; TPRN interacts with a number of DNA damage response proteins, is recruited to sites of DNA damage and may play a role in DNA damage repair. Mg(2+) serves as cofactor. Mn(2+) is required as a cofactor. The cofactor is Ca(2+). In terms of processing, phosphorylation has no effect on catalytic activity.

It is found in the cytoplasm. The protein resides in the nucleus. It localises to the nucleoplasm. Its subcellular location is the nucleolus. It carries out the reaction ATP-dependent breakage, passage and rejoining of double-stranded DNA.. Its function is as follows. Key decatenating enzyme that alters DNA topology by binding to two double-stranded DNA molecules, generating a double-stranded break in one of the strands, passing the intact strand through the broken strand, and religating the broken strand. May play a role in regulating the period length of BMAL1 transcriptional oscillation. In Rattus norvegicus (Rat), this protein is DNA topoisomerase 2-alpha (Top2a).